A 204-amino-acid chain; its full sequence is Inactive ribonuclease-like protein 9 (204 aa).

An N-terminal signal peptide occupies residues 1 to 26; sequence MMRTLITTHPLLLLLLLQQLLQPVQF. 3 disulfides stabilise this stretch: Cys-97/Cys-152, Cys-115/Cys-167, and Cys-122/Cys-129. Residues Asn-130 and Asn-142 are each glycosylated (N-linked (GlcNAc...) asparagine).

The protein belongs to the pancreatic ribonuclease family.

It localises to the secreted. In terms of biological role, does not exhibit any ribonuclease activity. This Macaca mulatta (Rhesus macaque) protein is Inactive ribonuclease-like protein 9 (RNASE9).